A 156-amino-acid chain; its full sequence is Ribosomal RNA large subunit methyltransferase H (156 aa).

Residues Leu73, Gly104, and 123–128 (LSALTL) each bind S-adenosyl-L-methionine.

Belongs to the RNA methyltransferase RlmH family. As to quaternary structure, homodimer.

The protein resides in the cytoplasm. It catalyses the reaction pseudouridine(1915) in 23S rRNA + S-adenosyl-L-methionine = N(3)-methylpseudouridine(1915) in 23S rRNA + S-adenosyl-L-homocysteine + H(+). Specifically methylates the pseudouridine at position 1915 (m3Psi1915) in 23S rRNA. The chain is Ribosomal RNA large subunit methyltransferase H from Colwellia psychrerythraea (strain 34H / ATCC BAA-681) (Vibrio psychroerythus).